We begin with the raw amino-acid sequence, 474 residues long: Aspartyl/glutamyl-tRNA(Asn/Gln) amidotransferase subunit B (474 aa).

It belongs to the GatB/GatE family. GatB subfamily. Heterotrimer of A, B and C subunits.

The catalysed reaction is L-glutamyl-tRNA(Gln) + L-glutamine + ATP + H2O = L-glutaminyl-tRNA(Gln) + L-glutamate + ADP + phosphate + H(+). It carries out the reaction L-aspartyl-tRNA(Asn) + L-glutamine + ATP + H2O = L-asparaginyl-tRNA(Asn) + L-glutamate + ADP + phosphate + 2 H(+). Allows the formation of correctly charged Asn-tRNA(Asn) or Gln-tRNA(Gln) through the transamidation of misacylated Asp-tRNA(Asn) or Glu-tRNA(Gln) in organisms which lack either or both of asparaginyl-tRNA or glutaminyl-tRNA synthetases. The reaction takes place in the presence of glutamine and ATP through an activated phospho-Asp-tRNA(Asn) or phospho-Glu-tRNA(Gln). The polypeptide is Aspartyl/glutamyl-tRNA(Asn/Gln) amidotransferase subunit B (Persephonella marina (strain DSM 14350 / EX-H1)).